Here is a 236-residue protein sequence, read N- to C-terminus: NAP1-binding protein 2 (236 aa).

Position 102 is a phosphoserine (serine 102). The region spanning isoleucine 110 to proline 171 is the SH3 domain. Phosphoserine occurs at positions 196 and 235.

As to quaternary structure, interacts with PBS2 and PTC1.

It is found in the cytoplasm. Its function is as follows. Negatively regulates the high-osmolarity glycerol (HOG) pathway through its negative regulation of the HOG1 kinase activity. Mediates the binding between the PTC1 phosphatase and the PBS2 MAP/ERK kinase (MEK). With PTC1, regulates endoplasmic reticulum inheritance through the cell wall integrity (CWI) MAPK pathway by modulating the MAPK, SLT2. The sequence is that of NAP1-binding protein 2 (NBP2) from Saccharomyces cerevisiae (strain ATCC 204508 / S288c) (Baker's yeast).